Reading from the N-terminus, the 290-residue chain is Small ribosomal subunit protein bS6 (290 aa).

The tract at residues 208-233 (VEEAKTTAKKPAAPKMSAAERAKVDG) is disordered.

Belongs to the bacterial ribosomal protein bS6 family.

In terms of biological role, binds together with bS18 to 16S ribosomal RNA. The sequence is that of Small ribosomal subunit protein bS6 from Mesoplasma florum (strain ATCC 33453 / NBRC 100688 / NCTC 11704 / L1) (Acholeplasma florum).